Consider the following 266-residue polypeptide: 5'-nucleotidase SurE (266 aa).

4 residues coordinate a divalent metal cation: Asp8, Asp9, Ser40, and Asn98.

The protein belongs to the SurE nucleotidase family. The cofactor is a divalent metal cation.

It is found in the cytoplasm. The catalysed reaction is a ribonucleoside 5'-phosphate + H2O = a ribonucleoside + phosphate. Its function is as follows. Nucleotidase that shows phosphatase activity on nucleoside 5'-monophosphates. The protein is 5'-nucleotidase SurE of Parasynechococcus marenigrum (strain WH8102).